Consider the following 772-residue polypeptide: Protocadherin beta-6 (772 aa).

A signal peptide spans 1 to 28 (METTLAKTPEKRQVVFLAILLLLWEAGS). 5 consecutive Cadherin domains span residues 31–133 (IRYS…SPEF), 134–242 (PDTE…APEF), 243–346 (VQSL…APKL), 347–450 (TISS…APAF), and 451–560 (TQTS…APFI). Topologically, residues 31-690 (IRYSIPEETE…QDEDMLTLYL (660 aa)) are extracellular. A disulfide bond links C96 and C102. N-linked (GlcNAc...) asparagine glycosylation is present at N169. A glycan (O-linked (Man) serine) is linked at S223. T225 is a glycosylation site (O-linked (Man) threonine). A glycan (N-linked (GlcNAc...) asparagine) is linked at N417. N566 is a glycosylation site (N-linked (GlcNAc...) asparagine). The Cadherin 6 domain occupies 575-675 (LPRAAEPGYL…SQPYLPLPEV (101 aa)). A helical membrane pass occupies residues 691–711 (VIALASVSSLFLLSVLLFVGV). At 712-772 (RLCRRVREAS…DFKFLNHYSQ (61 aa)) the chain is on the cytoplasmic side.

Forms homodimers in trans (molecules expressed by two different cells). Forms promiscuous heterodimers in cis (at the plasma membrane of the same cell) with other protocadherins.

The protein localises to the cell membrane. Functionally, calcium-dependent cell-adhesion protein involved in cells self-recognition and non-self discrimination. Thereby, it is involved in the establishment and maintenance of specific neuronal connections in the brain. The protein is Protocadherin beta-6 of Mus musculus (Mouse).